The primary structure comprises 394 residues: 1-deoxy-D-xylulose 5-phosphate reductoisomerase (394 aa).

8 residues coordinate NADPH: Thr10, Gly11, Ser12, Ile13, Gly38, Arg39, Asn40, and Asn123. Lys124 is a 1-deoxy-D-xylulose 5-phosphate binding site. Position 125 (Glu125) interacts with NADPH. Residue Asp149 participates in Mn(2+) binding. The 1-deoxy-D-xylulose 5-phosphate site is built by Ser150, Glu151, Ser175, and His198. Glu151 serves as a coordination point for Mn(2+). Gly204 serves as a coordination point for NADPH. 1-deoxy-D-xylulose 5-phosphate is bound by residues Ser211, Asn216, Lys217, and Glu220. Glu220 is a binding site for Mn(2+).

The protein belongs to the DXR family. The cofactor is Mg(2+). It depends on Mn(2+) as a cofactor.

It catalyses the reaction 2-C-methyl-D-erythritol 4-phosphate + NADP(+) = 1-deoxy-D-xylulose 5-phosphate + NADPH + H(+). It participates in isoprenoid biosynthesis; isopentenyl diphosphate biosynthesis via DXP pathway; isopentenyl diphosphate from 1-deoxy-D-xylulose 5-phosphate: step 1/6. Its function is as follows. Catalyzes the NADPH-dependent rearrangement and reduction of 1-deoxy-D-xylulose-5-phosphate (DXP) to 2-C-methyl-D-erythritol 4-phosphate (MEP). This is 1-deoxy-D-xylulose 5-phosphate reductoisomerase from Cereibacter sphaeroides (strain ATCC 17023 / DSM 158 / JCM 6121 / CCUG 31486 / LMG 2827 / NBRC 12203 / NCIMB 8253 / ATH 2.4.1.) (Rhodobacter sphaeroides).